Reading from the N-terminus, the 683-residue chain is Receptor-like serine/threonine-protein kinase At2g45590 (683 aa).

Residues 1 to 21 (MPSRLSPPDIPPLQPTPTVSD) are disordered. Residues 1 to 30 (MPSRLSPPDIPPLQPTPTVSDGHHRFQTLP) are Extracellular-facing. A helical membrane pass occupies residues 31–51 (LIIAGSLTLTGVLLILVTLLI). Over 52-683 (YRRLYRNRTA…FPFKSRKKAR (632 aa)) the chain is Cytoplasmic. Residues 92–664 (FSESTHLGHG…GVSEPPHLPF (573 aa)) enclose the Protein kinase domain. Residues 98-106 (LGHGGFGSV) and K121 each bind ATP. D223 functions as the Proton acceptor in the catalytic mechanism. The interval 406–436 (ERPSNNKEWINNGDGSSSVSKKKKKEKKRKP) is disordered. Positions 411-424 (NKEWINNGDGSSSV) are enriched in polar residues. Over residues 425–436 (SKKKKKEKKRKP) the composition is skewed to basic residues.

This sequence belongs to the protein kinase superfamily. Ser/Thr protein kinase family.

The protein resides in the cell membrane. The catalysed reaction is L-seryl-[protein] + ATP = O-phospho-L-seryl-[protein] + ADP + H(+). It catalyses the reaction L-threonyl-[protein] + ATP = O-phospho-L-threonyl-[protein] + ADP + H(+). The chain is Receptor-like serine/threonine-protein kinase At2g45590 from Arabidopsis thaliana (Mouse-ear cress).